Reading from the N-terminus, the 448-residue chain is MVFSPHTADDRARMLQEIGVERLEELFAAIPASYRFPQLDLPPAISEAEIYRELLEWSMQNFSTATTASFLGAGSYNHYVPAVVQQILWRGEFYTAYTPYQPEVSQGTLQAIYEFQSLICLLTGMEVSNASMYDGATALAEGALLCVSPPRGRNKIVVAGTVHPHYRSVLRTYTRGLPVSIVEVPIPETLRLQPNDVAQYLDDATACLVVQYPNFYGRIEDLAGFAERAHAVGARLVVSVYPIALGLLRPPGELGADVVTGEGQCLGIPQSFGGPALGILATRMELVRHLPGRLIGATVDREGKRGFVMVLQTREQHIRREKATSNICTNQGLMALAATVYLSTLGKQGLRKVAELCYHKAHYLAERIADLPAWNVIGDGPFFNEFAVRCPRDPREINAFLLERGIIGGLALGDLVPGQQDLMLLCATELTTREQIDRLVEALREATA.

Belongs to the GcvP family. N-terminal subunit subfamily. In terms of assembly, the glycine cleavage system is composed of four proteins: P, T, L and H. In this organism, the P 'protein' is a heterodimer of two subunits.

It catalyses the reaction N(6)-[(R)-lipoyl]-L-lysyl-[glycine-cleavage complex H protein] + glycine + H(+) = N(6)-[(R)-S(8)-aminomethyldihydrolipoyl]-L-lysyl-[glycine-cleavage complex H protein] + CO2. In terms of biological role, the glycine cleavage system catalyzes the degradation of glycine. The P protein binds the alpha-amino group of glycine through its pyridoxal phosphate cofactor; CO(2) is released and the remaining methylamine moiety is then transferred to the lipoamide cofactor of the H protein. The protein is Probable glycine dehydrogenase (decarboxylating) subunit 1 of Thermomicrobium roseum (strain ATCC 27502 / DSM 5159 / P-2).